The chain runs to 428 residues: Mitochondrial distribution and morphology protein 12 (428 aa).

Residues 1–387 enclose the SMP-LTD domain; that stretch reads MSFDINWNQL…WPSWICIDMN (387 aa). Disordered stretches follow at residues 75 to 168 and 387 to 428; these read VMNE…APPL and NDDD…EAGE. A compositionally biased stretch (basic and acidic residues) spans 81-96; the sequence is NDSKDEHLKNHGDGIN. The segment covering 106–133 has biased composition (acidic residues); sequence LDDEDEDDEDDDEDDEDEEEEDEDDYDD. Polar residues predominate over residues 146–161; sequence LNFNENSTTPSANSFA. Acidic residues predominate over residues 387-403; the sequence is NDDDDEEEEEEESEDND. The segment covering 412 to 428 has biased composition (basic and acidic residues); that stretch reads NDGKHGDGRTDETEAGE.

The protein belongs to the MDM12 family. As to quaternary structure, component of the ER-mitochondria encounter structure (ERMES) or MDM complex, composed of MMM1, MDM10, MDM12 and MDM34. An MMM1 homodimer associates with one molecule of MDM12 on each side in a pairwise head-to-tail manner, and the SMP-LTD domains of MMM1 and MDM12 generate a continuous hydrophobic tunnel for phospholipid trafficking.

The protein localises to the mitochondrion outer membrane. It is found in the endoplasmic reticulum membrane. Its function is as follows. Component of the ERMES/MDM complex, which serves as a molecular tether to connect the endoplasmic reticulum (ER) and mitochondria. Components of this complex are involved in the control of mitochondrial shape and protein biogenesis, and function in nonvesicular lipid trafficking between the ER and mitochondria. MDM12 is required for the interaction of the ER-resident membrane protein MMM1 and the outer mitochondrial membrane-resident beta-barrel protein MDM10. The MDM12-MMM1 subcomplex functions in the major beta-barrel assembly pathway that is responsible for biogenesis of all mitochondrial outer membrane beta-barrel proteins, and acts in a late step after the SAM complex. The MDM10-MDM12-MMM1 subcomplex further acts in the TOM40-specific pathway after the action of the MDM12-MMM1 complex. Essential for establishing and maintaining the structure of mitochondria and maintenance of mtDNA nucleoids. The protein is Mitochondrial distribution and morphology protein 12 of Candida albicans (strain SC5314 / ATCC MYA-2876) (Yeast).